Reading from the N-terminus, the 387-residue chain is 3-ketoacyl-CoA thiolase (387 aa).

The Acyl-thioester intermediate role is filled by Cys91. Residues His343 and Cys373 each act as proton acceptor in the active site.

It belongs to the thiolase-like superfamily. Thiolase family. Heterotetramer of two alpha chains (FadB) and two beta chains (FadA).

The protein localises to the cytoplasm. The enzyme catalyses an acyl-CoA + acetyl-CoA = a 3-oxoacyl-CoA + CoA. It functions in the pathway lipid metabolism; fatty acid beta-oxidation. In terms of biological role, catalyzes the final step of fatty acid oxidation in which acetyl-CoA is released and the CoA ester of a fatty acid two carbons shorter is formed. This is 3-ketoacyl-CoA thiolase from Escherichia coli (strain UTI89 / UPEC).